We begin with the raw amino-acid sequence, 579 residues long: Glycine--tRNA ligase (579 aa).

E175 contacts glycine. Residues 207–209 (RNE) and 218–219 (RV) contribute to the ATP site. Residue E226 participates in glycine binding. 327 to 328 (EC) contacts ATP. 442-444 (EPS) serves as a coordination point for glycine. R449 contributes to the ATP binding site.

This sequence belongs to the class-II aminoacyl-tRNA synthetase family. Homodimer.

It carries out the reaction tRNA(Gly) + glycine + ATP = glycyl-tRNA(Gly) + AMP + diphosphate. The catalysed reaction is 2 ATP + H(+) = P(1),P(4)-bis(5'-adenosyl) tetraphosphate + diphosphate. Functionally, catalyzes the ATP-dependent ligation of glycine to the 3'-end of its cognate tRNA, via the formation of an aminoacyl-adenylate intermediate (Gly-AMP). Also produces diadenosine tetraphosphate (Ap4A), a universal pleiotropic signaling molecule needed for cell regulation pathways, by direct condensation of 2 ATPs. Thereby, may play a special role in Ap4A homeostasis. This chain is Glycine--tRNA ligase, found in Encephalitozoon cuniculi (strain GB-M1) (Microsporidian parasite).